The primary structure comprises 279 residues: Large ribosomal subunit protein uL2 (279 aa).

The segment at 224-279 is disordered; that stretch reads AMNPIDHPHGGGEGRTSGGRHPVTPWGKGTKGNRTRKSKASDKLIVRSRHAKKKGR. A compositionally biased stretch (basic residues) spans 269 to 279; it reads VRSRHAKKKGR.

It belongs to the universal ribosomal protein uL2 family. Part of the 50S ribosomal subunit. Forms a bridge to the 30S subunit in the 70S ribosome.

In terms of biological role, one of the primary rRNA binding proteins. Required for association of the 30S and 50S subunits to form the 70S ribosome, for tRNA binding and peptide bond formation. It has been suggested to have peptidyltransferase activity; this is somewhat controversial. Makes several contacts with the 16S rRNA in the 70S ribosome. This chain is Large ribosomal subunit protein uL2, found in Cereibacter sphaeroides (strain ATCC 17025 / ATH 2.4.3) (Rhodobacter sphaeroides).